We begin with the raw amino-acid sequence, 447 residues long: UDP-N-acetylmuramate--L-alanine ligase (447 aa).

Glycine 108–serine 114 lines the ATP pocket.

Belongs to the MurCDEF family.

The protein resides in the cytoplasm. The enzyme catalyses UDP-N-acetyl-alpha-D-muramate + L-alanine + ATP = UDP-N-acetyl-alpha-D-muramoyl-L-alanine + ADP + phosphate + H(+). Its pathway is cell wall biogenesis; peptidoglycan biosynthesis. Functionally, cell wall formation. This chain is UDP-N-acetylmuramate--L-alanine ligase, found in Listeria monocytogenes serotype 4a (strain HCC23).